A 148-amino-acid chain; its full sequence is uncharacterized protein (148 aa).

The chain crosses the membrane as a helical span at residues 22–40 (YFLSLTVVISIIHLFTTCV). The segment at 43–141 (HNHSTHFPYL…YYPISRHYLH (99 aa)) is histidine-rich.

It localises to the host membrane. This is an uncharacterized protein from African swine fever virus (strain Badajoz 1971 Vero-adapted) (Ba71V).